Here is a 242-residue protein sequence, read N- to C-terminus: MTEYWVSQGNKWCEFCKIWIQNNPTSIRNHDLGKRHRECVDKKLTDMRERSAAKDKELKKNEKLLQQIEAKATRSYQKDIATAQQVAKANGAPEDGTSDWMLDSASGYYYNQTNGLHYDSQSGFYYSDSIGHWVTQDEAYAAVKTSSGTKVPLVKKPVSSSGAGPSVGKPPGRLVTASLNPKRAVKGAASSVDLGNNKRKRQDEKPKKVSAEEKAALKAREAARKRVEDREKPLLGLYNRPF.

The Matrin-type zinc-finger motif lies at 11–42 (KWCEFCKIWIQNNPTSIRNHDLGKRHRECVDK). Residues 42-71 (KKLTDMRERSAAKDKELKKNEKLLQQIEAK) adopt a coiled-coil conformation. Residues 154 to 242 (VKKPVSSSGA…PLLGLYNRPF (89 aa)) are disordered. Residues 155–172 (KKPVSSSGAGPSVGKPPG) show a composition bias toward low complexity. Positions 201-233 (RQDEKPKKVSAEEKAALKAREAARKRVEDREKP) are enriched in basic and acidic residues.

As to quaternary structure, component of a pre-mRNA splicing complex. Interacts with STA1. Interacts with PRP31.

It is found in the nucleus. Its subcellular location is the cajal body. Its function is as follows. Nucleic acid-binding protein that promotes Pol IV-dependent small interfering RNA (siRNA) accumulation, DNA methylation and transcriptional silencing. May possess both RNA-directed DNA methylation (RdDM)-dependent and -independent roles in transcriptional silencing. Acts as a pre-mRNA splicing factor that associates with several typical components of the splicing machinery as well as with Pol II. The protein is Zinc finger protein ZOP1 of Arabidopsis thaliana (Mouse-ear cress).